The sequence spans 101 residues: Chaperone modulatory protein CbpM (101 aa).

It belongs to the CbpM family.

Interacts with CbpA and inhibits both the DnaJ-like co-chaperone activity and the DNA binding activity of CbpA. Together with CbpA, modulates the activity of the DnaK chaperone system. Does not inhibit the co-chaperone activity of DnaJ. This is Chaperone modulatory protein CbpM from Pseudomonas putida (strain ATCC 47054 / DSM 6125 / CFBP 8728 / NCIMB 11950 / KT2440).